The primary structure comprises 212 residues: Ras-related protein Rab-43 (212 aa).

25-32 (GDASVGKT) provides a ligand contact to GTP. The Effector region signature appears at 47–55 (QGSTIGVDF). A Phosphoserine modification is found at S49. Residue 73–77 (DTAGQ) participates in GTP binding. A Phosphothreonine; by LRRK2 modification is found at T82. Residues 131–134 (NKSD) and 163–164 (AK) each bind GTP. Phosphoserine is present on S193. 2 S-geranylgeranyl cysteine lipidation sites follow: C210 and C212. The residue at position 212 (C212) is a Cysteine methyl ester.

The protein belongs to the small GTPase superfamily. Rab family. Interacts with GDI1, GDI2, CHM and CHML; phosphorylation at Thr-82 disrupts these interactions. As to expression, widely expressed in brain, testis, lung, heart, ovary, colon, kidney, uterus and spleen but not in liver.

It localises to the cytoplasmic vesicle. The protein resides in the phagosome. Its subcellular location is the phagosome membrane. The protein localises to the golgi apparatus. It is found in the trans-Golgi network membrane. It localises to the trans-Golgi network. Functionally, the small GTPases Rab are key regulators of intracellular membrane trafficking, from the formation of transport vesicles to their fusion with membranes. Rabs cycle between an inactive GDP-bound form and an active GTP-bound form that is able to recruit to membranes different set of downstream effectors directly responsible for vesicle formation, movement, tethering and fusion. The low intrinsic GTPase activity of RAB43 is activated by USP6NL. Involved in retrograde transport from the endocytic pathway to the Golgi apparatus. Involved in the transport of Shiga toxin from early and recycling endosomes to the trans-Golgi network. Required for the structural integrity of the Golgi complex. Plays a role in the maturation of phagosomes that engulf pathogens, such as S.aureus and M.tuberculosis. This chain is Ras-related protein Rab-43 (RAB43), found in Homo sapiens (Human).